A 282-amino-acid chain; its full sequence is Shikimate dehydrogenase (NADP(+)) (282 aa).

Residues 15 to 17 (SKS) and Thr-62 contribute to the shikimate site. The active-site Proton acceptor is the Lys-66. Residues Asn-87 and Asp-103 each coordinate shikimate. NADP(+)-binding positions include 127–131 (GAGGA), 151–156 (NRTHTK), and Met-220. Tyr-222 contacts shikimate. Gly-244 contacts NADP(+).

This sequence belongs to the shikimate dehydrogenase family. Homodimer.

It carries out the reaction shikimate + NADP(+) = 3-dehydroshikimate + NADPH + H(+). It functions in the pathway metabolic intermediate biosynthesis; chorismate biosynthesis; chorismate from D-erythrose 4-phosphate and phosphoenolpyruvate: step 4/7. Involved in the biosynthesis of the chorismate, which leads to the biosynthesis of aromatic amino acids. Catalyzes the reversible NADPH linked reduction of 3-dehydroshikimate (DHSA) to yield shikimate (SA). This is Shikimate dehydrogenase (NADP(+)) from Shewanella baltica (strain OS155 / ATCC BAA-1091).